A 161-amino-acid polypeptide reads, in one-letter code: Allophycocyanin alpha chain (161 aa).

Asparagine 71 carries the N4-methylasparagine modification. Cysteine 81 lines the (2R,3E)-phycocyanobilin pocket.

This sequence belongs to the phycobiliprotein family. Heterodimer of an alpha and a beta chain. Contains one covalently linked phycocyanobilin chromophore.

It localises to the plastid. Its subcellular location is the chloroplast thylakoid membrane. Light-harvesting photosynthetic bile pigment-protein from the phycobiliprotein complex. Allophycocyanin has a maximum absorption at approximately 650 nanometers. This Aglaothamnion neglectum (Red alga) protein is Allophycocyanin alpha chain (apcA).